The sequence spans 543 residues: Chaperonin GroEL (543 aa).

Residues 29 to 32 (TLGP), 86 to 90 (DGTTT), Gly413, 478 to 480 (NAA), and Asp494 contribute to the ATP site.

Belongs to the chaperonin (HSP60) family. In terms of assembly, forms a cylinder of 14 subunits composed of two heptameric rings stacked back-to-back. Interacts with the co-chaperonin GroES.

It localises to the cytoplasm. The catalysed reaction is ATP + H2O + a folded polypeptide = ADP + phosphate + an unfolded polypeptide.. In terms of biological role, together with its co-chaperonin GroES, plays an essential role in assisting protein folding. The GroEL-GroES system forms a nano-cage that allows encapsulation of the non-native substrate proteins and provides a physical environment optimized to promote and accelerate protein folding. This is Chaperonin GroEL from Lactobacillus johnsonii (strain CNCM I-12250 / La1 / NCC 533).